We begin with the raw amino-acid sequence, 240 residues long: Ubiquinone biosynthesis O-methyltransferase (240 aa).

Residues arginine 36, glycine 66, aspartate 87, and methionine 129 each coordinate S-adenosyl-L-methionine.

The protein belongs to the methyltransferase superfamily. UbiG/COQ3 family.

It catalyses the reaction a 3-demethylubiquinol + S-adenosyl-L-methionine = a ubiquinol + S-adenosyl-L-homocysteine + H(+). The enzyme catalyses a 3-(all-trans-polyprenyl)benzene-1,2-diol + S-adenosyl-L-methionine = a 2-methoxy-6-(all-trans-polyprenyl)phenol + S-adenosyl-L-homocysteine + H(+). It functions in the pathway cofactor biosynthesis; ubiquinone biosynthesis. In terms of biological role, O-methyltransferase that catalyzes the 2 O-methylation steps in the ubiquinone biosynthetic pathway. This chain is Ubiquinone biosynthesis O-methyltransferase, found in Pelagibacter ubique (strain HTCC1062).